We begin with the raw amino-acid sequence, 74 residues long: MKLTCVLIITVLFLTACQLTTAVTYSRGEHKHRALMSTGTNYRLPKTCRSSGRYCRSPYDCCRRYCRRITDACV.

The signal sequence occupies residues 1–22 (MKLTCVLIITVLFLTACQLTTA). A propeptide spanning residues 23-45 (VTYSRGEHKHRALMSTGTNYRLP) is cleaved from the precursor. 3 disulfides stabilise this stretch: cysteine 48-cysteine 62, cysteine 55-cysteine 66, and cysteine 61-cysteine 73.

It belongs to the conotoxin O1 superfamily. Expressed by the venom duct.

The protein localises to the secreted. The chain is Conotoxin MiK41 from Conus miles (Soldier cone).